Consider the following 866-residue polypeptide: Primer-independent DNA polymerase PolB (866 aa).

The interval 50 to 286 (SDLTLHIGFD…DRVPATIGAM (237 aa)) is exonuclease domain. The palm1 domain stretch occupies residues 287–385 (AVSRFTKTLK…GLLDILTPDY (99 aa)). The segment at 386–481 (GNIRLSKNPD…NSESTSVFLP (96 aa)) is TPR1 domain. Residues 482–522 (FVQQVRENRNRHIKGSLEEKFWKEIGNSLYGKLAQGLRAKT) are fingers domain. The TPR2 domain stretch occupies residues 523–549 (AFDTARGLNRSLPPSSVTQPFFAAHVT). Positions 550-678 (GFIRAVVGEL…PGQTLSRSTL (129 aa)) are palm2 domain. The segment at 679-866 (ISTREMWLSE…RKYPTFCLPV (188 aa)) is thumb domain.

Mn(2+) serves as cofactor.

The catalysed reaction is DNA(n) + a 2'-deoxyribonucleoside 5'-triphosphate = DNA(n+1) + diphosphate. In terms of biological role, DNA polymerase with primer-independent templated DNA polymerization activity, primer-dependent DNA polymerization activity with strand displacement, translesion synthesis activity across non-bulky base damage, 3'-5' exodeoxyribonuclease activity, and de novo primer synthesis activity. The enzyme is processive and faithful. Translation synthesis across abasic sites is coupled to de novo primer synthesis. Overexpression of wild-type protein increases survival of cells upon mitomycin C or UV treatment. The sequence is that of Primer-independent DNA polymerase PolB (pi-polB) from Escherichia coli.